A 240-amino-acid polypeptide reads, in one-letter code: EF-hand domain-containing protein D2 (240 aa).

Residues 1-51 (MATDELASKLSRRLQMEGEGGEATEQPGLNGAAAAAAAEAPDETAQALGSA) form a disordered region. Ala-2 carries the N-acetylalanine modification. At Ser-11 the chain carries Phosphoserine. Low complexity predominate over residues 32-47 (AAAAAAAEAPDETAQA). Phosphoserine is present on residues Ser-74 and Ser-76. Tyr-83 carries the post-translational modification Phosphotyrosine. 2 consecutive EF-hand domains span residues 92 to 127 (KQIK…LGAP) and 128 to 163 (QTHL…AAAG). 8 residues coordinate Ca(2+): Asp-105, Asp-109, Glu-116, Asp-141, Asp-143, Asp-145, Lys-147, and Glu-152. An N6-acetyllysine modification is found at Lys-233.

As to quaternary structure, interacts with CASP9; with inactive form. In terms of tissue distribution, detected in thymus, kidney, spleen, lung, liver and brain. Highest abundance in brain and lowest in kidney and thymus.

Its subcellular location is the membrane raft. In terms of biological role, may regulate B-cell receptor (BCR)-induced immature and primary B-cell apoptosis. Plays a role as negative regulator of the canonical NF-kappa-B-activating branch. Controls spontaneous apoptosis through the regulation of BCL2L1 abundance. In Mus musculus (Mouse), this protein is EF-hand domain-containing protein D2 (Efhd2).